Reading from the N-terminus, the 308-residue chain is Ribosomal protein L11 methyltransferase (308 aa).

The S-adenosyl-L-methionine site is built by T157, G178, D200, and N243.

This sequence belongs to the methyltransferase superfamily. PrmA family.

The protein resides in the cytoplasm. The enzyme catalyses L-lysyl-[protein] + 3 S-adenosyl-L-methionine = N(6),N(6),N(6)-trimethyl-L-lysyl-[protein] + 3 S-adenosyl-L-homocysteine + 3 H(+). Its function is as follows. Methylates ribosomal protein L11. This Desulforamulus reducens (strain ATCC BAA-1160 / DSM 100696 / MI-1) (Desulfotomaculum reducens) protein is Ribosomal protein L11 methyltransferase.